Reading from the N-terminus, the 255-residue chain is Putative SET domain-containing protein L678 (255 aa).

One can recognise an SET domain in the interval 5–176 (NRISEVFIKK…TGEELTDNYV (172 aa)). Residues 235 to 255 (LQQNSKNLKKNPKKTIKATPK) are disordered.

This sequence belongs to the class V-like SAM-binding methyltransferase superfamily.

This chain is Putative SET domain-containing protein L678, found in Acanthamoeba polyphaga mimivirus (APMV).